We begin with the raw amino-acid sequence, 163 residues long: Fatty acid-binding protein homolog (163 aa).

Positions 1 to 23 (MRCLVALILTVLIVTPEVEAKTL) are cleaved as a signal peptide.

This sequence belongs to the calycin superfamily. Fatty-acid binding protein (FABP) family. Abundant in the fluid surrounding the developing embryo of Ascaris suum.

Functionally, may play a role in sequestering potentially toxic fatty acids and their peroxidation products, or it may be involved in the maintenance of the impermeable lipid layer of the eggshell. This chain is Fatty acid-binding protein homolog, found in Ascaris suum (Pig roundworm).